The chain runs to 292 residues: Type II methyltransferase M.SmaI (292 aa).

The disordered stretch occupies residues 110–130 (WRDKDDKNKGRAMSYRPPTPE).

This sequence belongs to the N(4)/N(6)-methyltransferase family. N(4) subfamily.

It catalyses the reaction a 2'-deoxycytidine in DNA + S-adenosyl-L-methionine = an N(4)-methyl-2'-deoxycytidine in DNA + S-adenosyl-L-homocysteine + H(+). Functionally, a beta subtype methylase thatnrecognizes the double-stranded sequence 5'-CCCGGG-3', methylates C-2 on both strands, and protects the DNA from cleavage by the SmaI endonuclease. This is Type II methyltransferase M.SmaI (smaIM) from Serratia marcescens.